The chain runs to 529 residues: DEP domain-containing protein 1B (529 aa).

Positions 24-108 constitute a DEP domain; the sequence is FRARMPLRRH…DNRHLYRFPP (85 aa). At Ser-160 the chain carries Phosphoserine. The 193-residue stretch at 201 to 393 folds into the Rho-GAP domain; sequence DSLEEVLNTK…FLMDNYQEIL (193 aa). A Phosphoserine modification is found at Ser-436.

The sequence is that of DEP domain-containing protein 1B (Depdc1b) from Mus musculus (Mouse).